The sequence spans 1144 residues: Nitric oxide synthase, inducible (1144 aa).

Residues 23-27 (DINNN) carry the DINNN-motif; mediates interaction with SPSB1, SPSB2 and SPSB4 motif. Residues 37–59 (SPTIQDDPKSHQNGSPQLLTGTA) are disordered. Polar residues predominate over residues 47-59 (HQNGSPQLLTGTA). 2 residues coordinate Zn(2+): Cys104 and Cys109. (6R)-L-erythro-5,6,7,8-tetrahydrobiopterin is bound at residue Ser112. Residue Cys194 coordinates heme b. Positions 257, 366, 367, and 371 each coordinate L-arginine. Arg375, Ile456, Trp457, and Phe470 together coordinate (6R)-L-erythro-5,6,7,8-tetrahydrobiopterin. Tyr485 contacts heme b. The calmodulin-binding stretch occupies residues 509-529 (FRVLVKVVFFASMLMRKVMAS). The Flavodoxin-like domain occupies 533–671 (ATVLFATETG…AFRSWAVQTF (139 aa)). FMN contacts are provided by Thr539, Glu540, Thr541, Lys543, and Ser544. Tyr569 is subject to Phosphotyrosine. Residues Ser585, Thr586, Ser622, Cys629, Glu655, and Gln659 each coordinate FMN. Residues 724 to 964 (KNVFTMRLKS…VRSVSGFQLP (241 aa)) enclose the FAD-binding FR-type domain. Residue Arg744 coordinates NADP(+). FAD contacts are provided by His766, Arg900, Tyr902, Ser903, Thr918, and Ala920. Thr923 contributes to the NADP(+) binding site. FAD is bound by residues Tyr924, Val937, Cys938, and Ser939. Thr978, Arg1011, Ser1040, Arg1041, Lys1047, Tyr1049, Gln1051, and Asp1084 together coordinate NADP(+).

Belongs to the NOS family. Homodimer. Interacts with NHERF1. Interacts with GAPDH. Interacts with S100A8 and S100A9 to form the iNOS-S100A8/9 transnitrosylase complex. Interacts with SPSB1, SPSB2 and SPSB4. Interacts with ELOC and CUL5 in the presence of SPSB1 or SPSB2 or SPSB4. Forms a complex with ASL, ASS1 and HSP90AA1; the complex regulates cell-autonomous L-arginine synthesis and citrulline recycling while channeling extracellular L-arginine to nitric oxide synthesis pathway. Heme b serves as cofactor. The cofactor is FAD. It depends on FMN as a cofactor. (6R)-L-erythro-5,6,7,8-tetrahydrobiopterin is required as a cofactor. Polyubiquitinated; mediated by SPSB1, SPSB2 and SPSB4, leading to proteasomal degradation. In terms of tissue distribution, macrophages.

It localises to the cytoplasm. The protein localises to the cytosol. It carries out the reaction 2 L-arginine + 3 NADPH + 4 O2 + H(+) = 2 L-citrulline + 2 nitric oxide + 3 NADP(+) + 4 H2O. Its activity is regulated as follows. Not stimulated by calcium/calmodulin. Aspirin inhibits expression and function of this enzyme and effects may be exerted at the level of translational/post-translational modification and directly on the catalytic activity. Its function is as follows. Produces nitric oxide (NO) which is a messenger molecule with diverse functions throughout the body. In macrophages, NO mediates tumoricidal and bactericidal actions. Also has nitrosylase activity and mediates cysteine S-nitrosylation of cytoplasmic target proteins such PTGS2/COX2. As component of the iNOS-S100A8/9 transnitrosylase complex involved in the selective inflammatory stimulus-dependent S-nitrosylation of GAPDH implicated in regulation of the GAIT complex activity and probably multiple targets including ANXA5, EZR, MSN and VIM. Involved in inflammation, enhances the synthesis of pro-inflammatory mediators such as IL6 and IL8. This Mus musculus (Mouse) protein is Nitric oxide synthase, inducible (Nos2).